We begin with the raw amino-acid sequence, 193 residues long: Xanthine phosphoribosyltransferase (193 aa).

Leucine 20 and threonine 27 together coordinate xanthine. A 5-phospho-alpha-D-ribose 1-diphosphate-binding site is contributed by 128–132; it reads ANGQA. Lysine 156 is a binding site for xanthine.

Belongs to the purine/pyrimidine phosphoribosyltransferase family. Xpt subfamily. As to quaternary structure, homodimer.

The protein localises to the cytoplasm. The catalysed reaction is XMP + diphosphate = xanthine + 5-phospho-alpha-D-ribose 1-diphosphate. The protein operates within purine metabolism; XMP biosynthesis via salvage pathway; XMP from xanthine: step 1/1. Functionally, converts the preformed base xanthine, a product of nucleic acid breakdown, to xanthosine 5'-monophosphate (XMP), so it can be reused for RNA or DNA synthesis. This is Xanthine phosphoribosyltransferase from Streptococcus agalactiae serotype Ia (strain ATCC 27591 / A909 / CDC SS700).